The primary structure comprises 133 residues: Ribonucleases P/MRP protein subunit POP8 (133 aa).

As to quaternary structure, component of nuclear RNase P and RNase MRP complexes. RNase P consists of an RNA moiety and at least 9 protein subunits including POP1, POP3, POP4, POP5, POP6, POP7, POP8, RPP1 and RPR2. RNase MRP complex consists of an RNA moiety and at least 10 protein subunits including POP1, POP3, POP4, POP5, POP6, POP7, POP8, RMP1, RPP1 and SNM1, many of which are shared with the RNase P complex.

Its subcellular location is the nucleus. It carries out the reaction Endonucleolytic cleavage of RNA, removing 5'-extranucleotides from tRNA precursor.. Its function is as follows. Component of ribonuclease P, a protein complex that generates mature tRNA molecules by cleaving their 5'-ends. Also a component of RNase MRP, which cleaves pre-rRNA sequences. The polypeptide is Ribonucleases P/MRP protein subunit POP8 (POP8) (Saccharomyces cerevisiae (strain ATCC 204508 / S288c) (Baker's yeast)).